The primary structure comprises 870 residues: Ubiquitin-protein ligase E3A (870 aa).

Ser8 carries the post-translational modification Phosphoserine. The C4-type; atypical zinc finger occupies 42–81 (CGNEACTNEFCASCPTFLRMDNNAAAIKALELYKINAKLC). The segment covering 171 to 180 (EELKSLQEKD) has biased composition (basic and acidic residues). The tract at residues 171-223 (EELKSLQEKDEDKDEDEKEKAACSAAAMEEDSEASSSRMGDSSQGDNNVQKLG) is disordered. The span at 208-220 (RMGDSSQGDNNVQ) shows a compositional bias: polar residues. Ser213 is subject to Phosphoserine. Positions 542-870 (NPADLKKQLY…ITYAKGFGML (329 aa)) constitute an HECT domain. Tyr654 bears the Phosphotyrosine; by ABL1 mark. Cys838 serves as the catalytic Glycyl thioester intermediate.

The active form is probably a homotrimer. Binds UBQLN1 and UBQLN2. Interacts with the 26S proteasome. Interacts with BPY2. Interacts with HIF1AN, MAPK6 and NEURL4; interaction with MAPK6 may be mediated by NEURL4. Interacts with the proteasomal subunit PSMD4. Interacts with BMAL1. Interacts with ARC. Interacts with ESR1 and WBP2. In terms of processing, phosphorylation at Tyr-654 by ABL1 impairs E3 ligase activity. Widely expressed. Most abundant in brain, heart and thymus.

The protein localises to the cytoplasm. It is found in the nucleus. The catalysed reaction is S-ubiquitinyl-[E2 ubiquitin-conjugating enzyme]-L-cysteine + [acceptor protein]-L-lysine = [E2 ubiquitin-conjugating enzyme]-L-cysteine + N(6)-ubiquitinyl-[acceptor protein]-L-lysine.. It participates in protein modification; protein ubiquitination. E3 ubiquitin-protein ligase which accepts ubiquitin from an E2 ubiquitin-conjugating enzyme in the form of a thioester and transfers it to its substrates. Several substrates have been identified including the BMAL1, ARC, LAMTOR1, RAD23A and RAD23B, MCM7 (which is involved in DNA replication), annexin A1, the PML tumor suppressor, and the cell cycle regulator CDKN1B. Additionally, may function as a cellular quality control ubiquitin ligase by helping the degradation of the cytoplasmic misfolded proteins. Finally, UBE3A also promotes its own degradation in vivo. Plays an important role in the regulation of the circadian clock: involved in the ubiquitination of the core clock component BMAL1, leading to its proteasomal degradation. Acts as a regulator of synaptic development by mediating ubiquitination and degradation of ARC. Required for synaptic remodeling in neurons by mediating ubiquitination and degradation of LAMTOR1, thereby limiting mTORC1 signaling and activity-dependent synaptic remodeling. Synergizes with WBP2 in enhancing PGR activity. This Mus musculus (Mouse) protein is Ubiquitin-protein ligase E3A.